A 125-amino-acid polypeptide reads, in one-letter code: Small ribosomal subunit protein uS12 (125 aa).

A 3-methylthioaspartic acid modification is found at aspartate 89.

The protein belongs to the universal ribosomal protein uS12 family. In terms of assembly, part of the 30S ribosomal subunit. Contacts proteins S8 and S17. May interact with IF1 in the 30S initiation complex.

Its function is as follows. With S4 and S5 plays an important role in translational accuracy. In terms of biological role, interacts with and stabilizes bases of the 16S rRNA that are involved in tRNA selection in the A site and with the mRNA backbone. Located at the interface of the 30S and 50S subunits, it traverses the body of the 30S subunit contacting proteins on the other side and probably holding the rRNA structure together. The combined cluster of proteins S8, S12 and S17 appears to hold together the shoulder and platform of the 30S subunit. In Clostridium botulinum (strain ATCC 19397 / Type A), this protein is Small ribosomal subunit protein uS12.